We begin with the raw amino-acid sequence, 352 residues long: Protein RecA (352 aa).

68–75 (GPESSGKT) serves as a coordination point for ATP.

Belongs to the RecA family.

The protein resides in the cytoplasm. Its function is as follows. Can catalyze the hydrolysis of ATP in the presence of single-stranded DNA, the ATP-dependent uptake of single-stranded DNA by duplex DNA, and the ATP-dependent hybridization of homologous single-stranded DNAs. It interacts with LexA causing its activation and leading to its autocatalytic cleavage. This is Protein RecA from Clostridium perfringens (strain SM101 / Type A).